A 179-amino-acid chain; its full sequence is Nucleoside-triphosphatase THEP1 (179 aa).

ATP-binding positions include 7–14 and 98–105; these read GMPGVGKT and IIIIDEIG.

The protein belongs to the THEP1 NTPase family.

The catalysed reaction is a ribonucleoside 5'-triphosphate + H2O = a ribonucleoside 5'-diphosphate + phosphate + H(+). Its function is as follows. Has nucleotide phosphatase activity towards ATP, GTP, CTP, TTP and UTP. May hydrolyze nucleoside diphosphates with lower efficiency. This is Nucleoside-triphosphatase THEP1 from Pyrococcus abyssi (strain GE5 / Orsay).